We begin with the raw amino-acid sequence, 200 residues long: Probable GTP-binding protein EngB (200 aa).

The region spanning 26–200 is the EngB-type G domain; it reads SIPEIAIAGR…IYEIAQCIKK (175 aa). Residues 34 to 41, 61 to 65, 80 to 83, 147 to 150, and 179 to 181 contribute to the GTP site; these read GRSNVGKS, GCTKQ, DLPG, TKID, and TSS. The Mg(2+) site is built by serine 41 and threonine 63.

The protein belongs to the TRAFAC class TrmE-Era-EngA-EngB-Septin-like GTPase superfamily. EngB GTPase family. Mg(2+) is required as a cofactor.

Functionally, necessary for normal cell division and for the maintenance of normal septation. The protein is Probable GTP-binding protein EngB of Ehrlichia chaffeensis (strain ATCC CRL-10679 / Arkansas).